The following is a 1386-amino-acid chain: MPDPNELNANQSSLSRFAFNIYGALNQAQSLEGNSSASPTPSMNPKQHNKSGTSSSNKEKLVYNCEREVSCISQFNHSLNGLVKNYEEDPLHHLIIGGKNYLKLLAMNNDQTKIVHEVDILESSKSIYSSSRTLSSNKLTSVNTIESQHDTIACELATGLISVYKVQNNGKCKLVRKYSDHIRCVNSLDFINQSNVANSSSPYQLISGSQDGTIKLWDLRSASNKPTLTISSNSHSDPVRSCQYSPHSTVRNKLTILSVHDSGALCKYDLRSPNGGYQHNINVPERKWNFHTGPALSLNIHPEKEYVITGGRDQKVCIWNYGDSPTHQNKISPDYMINTYGPVMKIRWSVYPDNIPSKTDTSSSQYQQILESKRYDDKTSSNERETISTMSSVGKNDPLFNYDFACSFLNEDPTISIYNLKRKYIPKEVISSNSNKPFQNFMWAQNISHSRRVWTISKSNQFMSYDLDTAQSDPNIIKPLDNLTSVSMAWNSGLGDFCFVNQEKDEFESISQLENDSFRSESEEYDPEFALASDGSGLASNSGMEDHPTDERSLKYRISSNSLDNSSIYNNHSKITVASIPIASNASNTPLSYQNPSFSNSVSPPFEQTTKPSLHRSATHNPMIQPPKPLSSILQNRSSVGIEALMEHGNNNSGSNSASVSGNHLRPTLNRNHSQSTQGSNVSLSSSIQGYQAPPPVSKRVISVNHPSPYIVPLSLPLPQNDEHAFEILSNNYLITVNDGLSLIDVCLYNANIAAGVNKFRDCQTWRVLAVSLEEDKFSLINYEENIRSQFEKAETAITYGSLDTYENNSNTSNSKTQLNQTNDNRSILSELDNFVGSFNSNSTSTSNYGGVHSEKDTSNNIELSNANNNGSRKASFSEIKPLSNLNSPSHLKDVLNQSRSNSNSPVISRSNSMLLKNRKTINTGSTRAENHESAIDDDDGMGNAKTCELNENDSQFGMKNSELKKHSSMSAIDSEAIDNDFPYNIESAKASPIKIGSQHKHEKNTTSGSMSPQNKDSNHRGNIINYQRRLSLDPENSRKNSRNAFNYRHTNTWDLDDENSNIIGNRAQWATNSSLSSCGVSSYQPRIGSPNYSDQLHHSYSSTHSSPRPYYNSTTPGSSRRNSHISPVHGFHNKTSYAKQSPVSQKLMRDEQSRTELKDVQEQIEDLESIEETKVTSVNFGKSELTRAITGNNTGSPNTLYKPWKTEYLLKEALEFASLQGDILLCSILTILFYDYLKVGKDSHVFSKEQSLDWLSLYVEILHRKQLFSNAMYVVNMAPKELLPDLANLASTEVNLRFFCCWCQKLLVNEKSKRKALNEDSFGYWYCDECSTKQSNCIYCDEPCKGLNIVTSLSCGHRGHFGCLREWFIDQENIVCPGGCDEQVI.

Polar residues predominate over residues 31 to 56 (LEGNSSASPTPSMNPKQHNKSGTSSS). Residues 31–58 (LEGNSSASPTPSMNPKQHNKSGTSSSNK) form a disordered region. 4 WD repeats span residues 180–227 (DHIR…NKPT), 234–278 (SHSD…GGYQ), 290–329 (FHTG…THQN), and 382–428 (NERE…IPKE). 2 stretches are compositionally biased toward low complexity: residues 595 to 606 (NPSFSNSVSPPF) and 649 to 663 (GNNN…VSGN). Disordered regions lie at residues 595–629 (NPSF…PPKP), 647–691 (EHGN…IQGY), 844–958 (TSTS…SQFG), 991–1021 (ASPI…SNHR), and 1090–1157 (SPNY…SRTE). Positions 669 to 690 (LNRNHSQSTQGSNVSLSSSIQG) are enriched in polar residues. The span at 859–872 (SNNIELSNANNNGS) shows a compositional bias: low complexity. Composition is skewed to polar residues over residues 884–928 (SNLN…GSTR), 1006–1016 (TTSGSMSPQNK), 1090–1121 (SPNY…GSSR), and 1134–1145 (NKTSYAKQSPVS). The segment covering 1148-1157 (LMRDEQSRTE) has biased composition (basic and acidic residues). The stretch at 1171–1212 (IEETKVTSVNFGKSELTRAITGNNTGSPNTLYKPWKTEYLLK) is one WD 5 repeat. Residues 1338–1381 (CIYCDEPCKGLNIVTSLSCGHRGHFGCLREWFIDQENIVCPGGC) form an RING-type; degenerate zinc finger.

This sequence belongs to the WD repeat RTC1 family.

The protein resides in the vacuole. Functionally, may be involved in a process influencing telomere capping. This chain is Restriction of telomere capping protein 1 (RTC1), found in Debaryomyces hansenii (strain ATCC 36239 / CBS 767 / BCRC 21394 / JCM 1990 / NBRC 0083 / IGC 2968) (Yeast).